Reading from the N-terminus, the 539-residue chain is Carboxysome assembly protein CcmM (539 aa).

The carbonic anhydrase-like domain stretch occupies residues 1-214; sequence MPSPTTVPVA…PLRPSSSEAT (214 aa). The interval 194–213 is disordered; it reads TADFHSTPTPSPLRPSSSEA. The stretch at 226–397 is one RbcS-like repeat 1, SSUL1 repeat; sequence SSEVITQVRS…VLAELENCLS (172 aa). Cystine bridges form between Cys-261–Cys-279 and Cys-377–Cys-395. One copy of the RbcS-like repeat 2, SSUL2 repeat lies at 341-425; sequence LSAEVVNKVR…RVFEALIQDP (85 aa). Residues 427 to 459 form a disordered region; it reads GPVGSAKAAAAPVSSATPSSHSYTSNGSSSSDV. Positions 431–457 are enriched in low complexity; the sequence is SAKAAAAPVSSATPSSHSYTSNGSSSS. One copy of the RbcS-like repeat 3, SSUL3 repeat lies at 453 to 539; it reads GSSSSDVAGQ…RVAELLIQKP (87 aa).

Belongs to the gamma-class carbonic anhydrase family. In terms of assembly, probably a homotrimer. Purifies from carboxysomes in complex with both RuBisCO subunits and carbonic anhydrase (ccaA); the complex is probably associated with the carboxysome shell. Interacts with CcmN. Binds holo-RuBisCO (RbcL(8)-RbcS(8)) via its SSUL domains; the SSUL domain binds close to the equitorial domain of RuBisCO between RbcL dimers, with 1 M35 protein per dimer. The short form purifies from carboxysomes in complex with both RuBisCO subunits; the complex is probably associated with the carboxysome shell. Post-translationally, identified as 2 proteins of 58 and 38 kDa by mass spectrometry, called M58 and M35, the shorter protein is translated starting at Val-216. Protease inhibitors do not alter the appearance of M35. In isolated carboxysomes M35 is 4-5 fold more abundant. The first amino acid (equivalent to Val-216) is not seen in Edman degradation, while Tyr-219 and Gln-222 may be post-translationally modified.

It localises to the carboxysome. Functionally, functions as a scaffold protein for the assembly of beta-carboxysomes, initiates carboxysome assembly by coalescing RuBisCO (ribulose bisphosphate carboxylase, rbcL-rbcS). Produced as a full-length (M58) and a shorter form (M35); both forms are required for correct carboxysome assembly and growth. The short form is more abundant. Despite its strong similarity to gamma-class carbonic anhydrase (CA) it does not have detectable CA activity. Its function is as follows. The M35 isoform is able to condense RuBisCO into a liquid matrix; the presence of disulfide bonds in M35 reduces affinity for RuBisCO, while mutating all 4 Cys to Ser causes a 4-fold increase in doubling time, more than 15% increase in CO(2) requirement, and abnormal carboxysomes. In terms of biological role, beta-carboxysome assembly initiates when soluble RuBisCO is condensed into a liquid matrix in a pre-carboxysome by the RbcS-like domains of probably both CcmM58 and CcmM35. CcmN interacts with the N-terminus of CcmM58, and then recruits the CcmK2 major shell protein plus other less abundant CcmK proteins via CcmN's encapsulation peptide. Shell formation requires CcmK proteins and CcmO. CcmL caps the otherwise elongated carboxysome. Once fully encapsulated carboxysomes are formed, they migrate within the cell probably via interactions with the cytoskeleton. This chain is Carboxysome assembly protein CcmM, found in Synechococcus elongatus (strain ATCC 33912 / PCC 7942 / FACHB-805) (Anacystis nidulans R2).